We begin with the raw amino-acid sequence, 287 residues long: Nucleotide-binding protein Gbem_0872 (287 aa).

ATP is bound at residue 8 to 15; that stretch reads GLSGSGKS. 59–62 is a binding site for GTP; it reads DIRS.

It belongs to the RapZ-like family.

Its function is as follows. Displays ATPase and GTPase activities. This Citrifermentans bemidjiense (strain ATCC BAA-1014 / DSM 16622 / JCM 12645 / Bem) (Geobacter bemidjiensis) protein is Nucleotide-binding protein Gbem_0872.